A 387-amino-acid polypeptide reads, in one-letter code: Cysteine desulfurase (387 aa).

Residues 72–73 (GT), Asn-152, Gln-180, and 200–202 (SAH) contribute to the pyridoxal 5'-phosphate site. Lys-203 is subject to N6-(pyridoxal phosphate)lysine. Pyridoxal 5'-phosphate is bound at residue Thr-238. Cys-323 acts as the Cysteine persulfide intermediate in catalysis. Cys-323 serves as a coordination point for [2Fe-2S] cluster.

It belongs to the class-V pyridoxal-phosphate-dependent aminotransferase family. NifS/IscS subfamily. Homodimer. Requires pyridoxal 5'-phosphate as cofactor.

It carries out the reaction (sulfur carrier)-H + L-cysteine = (sulfur carrier)-SH + L-alanine. Catalyzes the removal of elemental sulfur atoms from cysteine to produce alanine. Seems to participate in the biosynthesis of the nitrogenase metalloclusters by providing the inorganic sulfur required for the Fe-S core formation. In Cereibacter sphaeroides (Rhodobacter sphaeroides), this protein is Cysteine desulfurase.